The primary structure comprises 474 residues: Mitochondrial import inner membrane translocase subunit TIM44-1 (474 aa).

The N-terminal 54 residues, 1 to 54 (MAIRKIIRDLLITKQPLLRQLFHQRVLRANARSEFLPAIGYTSHRRFSVFTEFS), are a transit peptide targeting the mitochondrion. Positions 68–88 (ERTVKELKERTEEFKGVTEDL) form a coiled coil. A compositionally biased stretch (basic and acidic residues) spans 132–143 (VKESFKLGKEEN). A disordered region spans residues 132–165 (VKESFKLGKEENAESASSSGTRASQGEKQQSGST). The segment covering 145-165 (ESASSSGTRASQGEKQQSGST) has biased composition (polar residues).

Belongs to the Tim44 family. Probable component of the PAM complex at least composed of a mitochondrial HSP70 protein, TIMM44 and TIMM14. The complex interacts with the TIMM23 component of the TIM17:23 complex. Expressed in roots, flowers, young cotyledons and leaves.

The protein resides in the mitochondrion inner membrane. Its function is as follows. Essential component of the PAM complex, a complex required for the translocation of transit peptide-containing proteins from the inner membrane into the mitochondrial matrix in an ATP-dependent manner. Recruits mitochondrial HSP70 to drive protein translocation into the matrix using ATP as an energy source. This is Mitochondrial import inner membrane translocase subunit TIM44-1 (TIM44-1) from Arabidopsis thaliana (Mouse-ear cress).